A 470-amino-acid chain; its full sequence is Putative multidrug resistance protein MdtD (470 aa).

Topologically, residues 1 to 11 (MTELPDNTRWQ) are periplasmic. The helical transmembrane segment at 12–32 (LWIVAFGFFMQSLDTTIVNTA) threads the bilayer. Topologically, residues 33 to 48 (LPSMAKSLGESPLHMH) are cytoplasmic. A helical membrane pass occupies residues 49 to 69 (MVVVSYVLTVAVMLPASGWLA). At 70–76 (DKIGVRN) the chain is on the periplasmic side. A helical transmembrane segment spans residues 77–97 (IFFAAIVLFTLGSLFCALSGT). Topologically, residues 98 to 101 (LNQL) are cytoplasmic. The chain crosses the membrane as a helical span at residues 102 to 124 (VLARVLQGVGGAMMVPVGRLTVM). The Periplasmic segment spans residues 125 to 137 (KIVPRAQYMAAMT). Residues 138-158 (FVTLPGQIGPLLGPALGGVLV) traverse the membrane as a helical segment. The Cytoplasmic portion of the chain corresponds to 159-164 (EYASWH). A helical membrane pass occupies residues 165–185 (WIFLINIPVGIVGAMATFMLM). Residues 186–196 (PNYIIETRRFD) are Periplasmic-facing. Residues 197–217 (LPGFLLLAIGMAVLTLALDGS) traverse the membrane as a helical segment. Residues 218–224 (KSMGISP) lie on the Cytoplasmic side of the membrane. The helical transmembrane segment at 225–245 (WTLAGLAAGGAAAILLYLFHA) threads the bilayer. Residues 246–262 (KKNSGALFSLRLFRTPT) lie on the Periplasmic side of the membrane. The helical transmembrane segment at 263–283 (FSLGLLGSFAGRIGSGMLPFM) threads the bilayer. Topologically, residues 284 to 285 (TP) are cytoplasmic. Residues 286–306 (VFLQIGLGFSPFHAGLMMIPM) traverse the membrane as a helical segment. Residues 307–341 (VLGSMGMKRIVVQIVNRFGYRRVLVATTLGLALVS) lie on the Periplasmic side of the membrane. Residues 342–362 (LLFMSVALLGWYYLLPLVLLL) form a helical membrane-spanning segment. Residues 363–395 (QGMVNSARFSSMNTLTLKDLPDTLASSGNSLLS) lie on the Cytoplasmic side of the membrane. The chain crosses the membrane as a helical span at residues 396 to 416 (MIMQLSMSIGVTIAGMLLGMF). Residues 417–430 (GQQHIGIDSSATHH) are Periplasmic-facing. Residues 431 to 451 (VFMYTWLCMAVIIALPAIIFA) form a helical membrane-spanning segment. Residues 452 to 470 (RVPNDTQQNMVISRRKRSL) are Cytoplasmic-facing.

It belongs to the major facilitator superfamily. TCR/Tet family.

It is found in the cell inner membrane. In Salmonella typhimurium (strain LT2 / SGSC1412 / ATCC 700720), this protein is Putative multidrug resistance protein MdtD.